The chain runs to 370 residues: Phosphoribosylformylglycinamidine cyclo-ligase (370 aa).

It belongs to the AIR synthase family.

It is found in the cytoplasm. The catalysed reaction is 2-formamido-N(1)-(5-O-phospho-beta-D-ribosyl)acetamidine + ATP = 5-amino-1-(5-phospho-beta-D-ribosyl)imidazole + ADP + phosphate + H(+). Its pathway is purine metabolism; IMP biosynthesis via de novo pathway; 5-amino-1-(5-phospho-D-ribosyl)imidazole from N(2)-formyl-N(1)-(5-phospho-D-ribosyl)glycinamide: step 2/2. The protein is Phosphoribosylformylglycinamidine cyclo-ligase of Rhodospirillum rubrum (strain ATCC 11170 / ATH 1.1.1 / DSM 467 / LMG 4362 / NCIMB 8255 / S1).